We begin with the raw amino-acid sequence, 297 residues long: Phosphatidylserine decarboxylase proenzyme (297 aa).

Catalysis depends on charge relay system; for autoendoproteolytic cleavage activity residues aspartate 92, histidine 149, and serine 254. Serine 254 functions as the Schiff-base intermediate with substrate; via pyruvic acid; for decarboxylase activity in the catalytic mechanism. The residue at position 254 (serine 254) is a Pyruvic acid (Ser); by autocatalysis.

This sequence belongs to the phosphatidylserine decarboxylase family. PSD-B subfamily. Prokaryotic type I sub-subfamily. In terms of assembly, heterodimer of a large membrane-associated beta subunit and a small pyruvoyl-containing alpha subunit. The cofactor is pyruvate. Is synthesized initially as an inactive proenzyme. Formation of the active enzyme involves a self-maturation process in which the active site pyruvoyl group is generated from an internal serine residue via an autocatalytic post-translational modification. Two non-identical subunits are generated from the proenzyme in this reaction, and the pyruvate is formed at the N-terminus of the alpha chain, which is derived from the carboxyl end of the proenzyme. The autoendoproteolytic cleavage occurs by a canonical serine protease mechanism, in which the side chain hydroxyl group of the serine supplies its oxygen atom to form the C-terminus of the beta chain, while the remainder of the serine residue undergoes an oxidative deamination to produce ammonia and the pyruvoyl prosthetic group on the alpha chain. During this reaction, the Ser that is part of the protease active site of the proenzyme becomes the pyruvoyl prosthetic group, which constitutes an essential element of the active site of the mature decarboxylase.

The protein resides in the cell membrane. The enzyme catalyses a 1,2-diacyl-sn-glycero-3-phospho-L-serine + H(+) = a 1,2-diacyl-sn-glycero-3-phosphoethanolamine + CO2. The protein operates within phospholipid metabolism; phosphatidylethanolamine biosynthesis; phosphatidylethanolamine from CDP-diacylglycerol: step 2/2. Functionally, catalyzes the formation of phosphatidylethanolamine (PtdEtn) from phosphatidylserine (PtdSer). This Bordetella bronchiseptica (strain ATCC BAA-588 / NCTC 13252 / RB50) (Alcaligenes bronchisepticus) protein is Phosphatidylserine decarboxylase proenzyme.